The following is a 65-amino-acid chain: Large ribosomal subunit protein bL35 (65 aa).

The protein belongs to the bacterial ribosomal protein bL35 family.

This chain is Large ribosomal subunit protein bL35, found in Thermotoga petrophila (strain ATCC BAA-488 / DSM 13995 / JCM 10881 / RKU-1).